Consider the following 88-residue polypeptide: Large ribosomal subunit protein bL27 (88 aa).

Belongs to the bacterial ribosomal protein bL27 family.

This Carboxydothermus hydrogenoformans (strain ATCC BAA-161 / DSM 6008 / Z-2901) protein is Large ribosomal subunit protein bL27.